The sequence spans 745 residues: MSLITRLLTGNITLRRRAMESLGKAGYSSHAKFSEHKPIERIRNIGISAHIDSGKTTLTERILFYTGRIAEMHEVRGKDNVGATMDSMELERQRGITIQSAATYTLWKDTNINIIDTPGHVDFTVEVERALRVLDGAVLVLCAVGGVQSQTLTVNRQMKRYNVPCLAFINKLDRLGSNPYRVLSQMRSKMNHNAAFIQLPIGVESNCKGIVDLVREKAIYFEGEHGMDIRLDEIPQDMRVESLERRQELIEHLSNADETLGELFLEEKPFTEDDIKAALRRTCINRTFTPVLVGTALKNKGVQPLLDAVLDYLPNPGEVENLGFIEKEGQDPEKVVLNPARDGKDPFVGLAFKLEAGRFGQLTYLRCYQGVLRKGDNIFNARTNKKVRIARLVRLHSNQMEDVNEVYAGDIFALFGVDCASGDTFTTNPKNNLSMESIFVPEPVVSMAIKPNNTKDRDNFSKAIARFTKEDPTFHFFFDNDVKETLVSGMGELHLEIYAQRMEREYGCPVTLGKPKVAFRETLVGPCEFDYLHKKQSGGSGQYARIIGVMEPLPPTQNTLLEFVDETVGTNVPKQFVPGVEKGYREMAEKGMLSGHKLSGIRFRLQDGGHHIVDSSELAFMLASHGAIKEVFQNGSWQILEPIMLVEVTAPEEFQGAVMGHLSKRHGIITGTEGTEGWFTVYAEVPLNDMFGYAGELRSSTQGKGEFTMEYSRYSPCLPDVQDQIVRQYQESQGLAQPDKKKKKN.

One can recognise a tr-type G domain in the interval 40–317; that stretch reads ERIRNIGISA…AVLDYLPNPG (278 aa). Residues 49–56, 116–120, and 170–173 each bind GTP; these read AHIDSGKT, DTPGH, and NKLD.

Belongs to the TRAFAC class translation factor GTPase superfamily. Classic translation factor GTPase family. EF-G/EF-2 subfamily.

It localises to the mitochondrion. The protein operates within protein biosynthesis; polypeptide chain elongation. Its function is as follows. Mitochondrial GTPase that catalyzes the GTP-dependent ribosomal translocation step during translation elongation. During this step, the ribosome changes from the pre-translocational (PRE) to the post-translocational (POST) state as the newly formed A-site-bound peptidyl-tRNA and P-site-bound deacylated tRNA move to the P and E sites, respectively. Catalyzes the coordinated movement of the two tRNA molecules, the mRNA and conformational changes in the ribosome. Essential during development as it acts as a retrograde signal from mitochondria to the nucleus to slow down cell proliferation if mitochondrial energy output is low. The chain is Elongation factor G, mitochondrial from Drosophila yakuba (Fruit fly).